Consider the following 417-residue polypeptide: Serine hydroxymethyltransferase (417 aa).

Residues Leu-121 and 125-127 (GHL) contribute to the (6S)-5,6,7,8-tetrahydrofolate site. Lys-229 is modified (N6-(pyridoxal phosphate)lysine). Residue 355 to 357 (SPF) coordinates (6S)-5,6,7,8-tetrahydrofolate.

The protein belongs to the SHMT family. Homodimer. It depends on pyridoxal 5'-phosphate as a cofactor.

The protein resides in the cytoplasm. It catalyses the reaction (6R)-5,10-methylene-5,6,7,8-tetrahydrofolate + glycine + H2O = (6S)-5,6,7,8-tetrahydrofolate + L-serine. It participates in one-carbon metabolism; tetrahydrofolate interconversion. Its pathway is amino-acid biosynthesis; glycine biosynthesis; glycine from L-serine: step 1/1. Functionally, catalyzes the reversible interconversion of serine and glycine with tetrahydrofolate (THF) serving as the one-carbon carrier. This reaction serves as the major source of one-carbon groups required for the biosynthesis of purines, thymidylate, methionine, and other important biomolecules. Also exhibits THF-independent aldolase activity toward beta-hydroxyamino acids, producing glycine and aldehydes, via a retro-aldol mechanism. In Klebsiella pneumoniae subsp. pneumoniae (strain ATCC 700721 / MGH 78578), this protein is Serine hydroxymethyltransferase.